Reading from the N-terminus, the 156-residue chain is Small ribosomal subunit protein uS7 (156 aa).

This sequence belongs to the universal ribosomal protein uS7 family. In terms of assembly, part of the 30S ribosomal subunit. Contacts proteins S9 and S11.

Functionally, one of the primary rRNA binding proteins, it binds directly to 16S rRNA where it nucleates assembly of the head domain of the 30S subunit. Is located at the subunit interface close to the decoding center, probably blocks exit of the E-site tRNA. This is Small ribosomal subunit protein uS7 from Klebsiella pneumoniae subsp. pneumoniae (strain ATCC 700721 / MGH 78578).